Here is a 356-residue protein sequence, read N- to C-terminus: Guanine nucleotide-binding protein alpha-15 subunit (356 aa).

Glycine 2 carries N-myristoyl glycine lipidation. A lipid anchor (S-palmitoyl cysteine) is attached at cysteine 5. The G-alpha domain occupies 33-356 (GNQKLLLLGT…GRNLRGTGME (324 aa)). The G1 motif stretch occupies residues 36–49 (KLLLLGTGECGKST). GTP-binding positions include 41-48 (GTGECGKS), 177-183 (LRIRIPT), 202-206 (DVGGQ), 271-274 (NKRD), and alanine 328. Residues serine 48 and threonine 183 each coordinate Mg(2+). A G2 motif region spans residues 175–183 (DMLRIRIPT). A G3 motif region spans residues 198–207 (FRIFDVGGQR). Positions 267-274 (ILFLNKRD) are G4 motif. The tract at residues 326 to 331 (TCATDT) is G5 motif.

Belongs to the G-alpha family. G proteins are composed of 3 units; alpha, beta and gamma. The alpha chain contains the guanine nucleotide binding site.

Its function is as follows. Guanine nucleotide-binding proteins (G proteins) are involved as modulators or transducers in various transmembrane signaling systems. This chain is Guanine nucleotide-binding protein alpha-15 subunit (gpa-15), found in Caenorhabditis briggsae.